The sequence spans 950 residues: Oxysterol-binding protein-related protein 1 (950 aa).

Residues 1-237 form an interaction with RAB7A region; the sequence is MNTEAEQQLL…NKVVHKALKR (237 aa). ANK repeat units follow at residues 47 to 76, 80 to 109, and 175 to 204; these read LGWT…KVNM, MGDT…DSTV, and LGNT…DPSL. The region spanning 235–334 is the PH domain; that stretch reads LKRYEGPLWK…WLEAIEEHSA (100 aa). Residues 430 to 463 adopt a coiled-coil conformation; that stretch reads NFKLEQEQEKNKILSEALETLATEHHELERSLVE. The FFAT signature appears at 469–483; that stretch reads SILSEEEFYDALSGS. Phosphoserine is present on S499. Disordered stretches follow at residues 502 to 530 and 795 to 821; these read ENEV…SNGI and KKNT…VPDS. Positions 879–913 form a coiled coil; it reads RAMENGEIDLASEEKKRLEEKQRAARKNRSKSEED.

It belongs to the OSBP family. Interacts (via FFAT motif) with VAPA and VAPB. Interacts with the GTP-bound form of RAB7A. Interacts with OAS1B. Interacts (via FFAT motif) with MOSPD2 (via MSP domain). In terms of tissue distribution, ubiquitous.

Its subcellular location is the late endosome. In terms of biological role, binds phospholipids; exhibits strong binding to phosphatidic acid and weak binding to phosphatidylinositol 3-phosphate. Stabilizes GTP-bound RAB7A on late endosomes/lysosomes and alters functional properties of late endocytic compartments via its interaction with RAB7A. Binds 25-hydroxycholesterol and cholesterol. The sequence is that of Oxysterol-binding protein-related protein 1 from Mus musculus (Mouse).